Consider the following 482-residue polypeptide: Nuclear transcription factor Y subunit nfya-1 (482 aa).

Residues 1-160 (MNGASRGDVQ…NGSYIQYNEP (160 aa)) form a disordered region. Over residues 72–93 (SSPNVQTQCHQPPVVRSQTHQA) the composition is skewed to polar residues. A compositionally biased stretch (low complexity) spans 94 to 110 (SVSQTTPTQTTPSQYTP). 2 stretches are compositionally biased toward polar residues: residues 126–135 (HVTPSQQQRI) and 144–160 (VSQS…YNEP). The short motif at 306–329 (LVNPKQFNRIMRRREMRQQLEASG) is the Subunit association domain (SAD) element. The segment at residues 336 to 361 (QKYLHESRHLHALKRKRGLDGRFDNT) is a DNA-binding region (NFYA/HAP2-type). Residues 344–414 (HLHALKRKRG…QPKGGIVNSS (71 aa)) form a disordered region. Positions 353–362 (GLDGRFDNTK) are enriched in basic and acidic residues. Low complexity predominate over residues 363–375 (TAESSSMVSSTTS).

This sequence belongs to the NFYA/HAP2 subunit family. Forms a heterotrimeric transcription factor complex (nfya-1-NF-Y complex) composed of nfya-1, nfyb-1 and nfyc-1, which binds to 5'-CCAAT-3' box motif in the promoters of its target genes. Interacts with the nfyb-1 and nfyc-1 dimer; the interaction is required for subsequent binding to the 5'-CCAAT-3' box motif in DNA. Does not interact with either nfyb-1 or nfyc-1 in their monomeric form. Interacts with mes-3. In terms of tissue distribution, expressed in certain parts of the gonads with high expression in fertilized oocytes in the uterus and mature oocytes from the distal to the proximal arm of the gonad, but weak expression in the syncytial ovaries and immature oocytes at the beginning of the proximal arm of the gonad. Highly expressed in the head ganglia neurons and the developing hermaphrodite vulva and male tail. Weakly expressed in most somatic cells. Not expressed in the intestine, the hypodermis, body wall muscle surrounding the pseudocoelomic space, secretory cells in the pharyngeal terminal bulb wall, in the small ganglia surrounding the pharynx and in the neurons running anteriorly to the sensory organs in the head.

It localises to the nucleus. Functionally, component of the sequence-specific heterotrimeric transcription factor (nfya-1-NF-Y) which specifically recognizes a 5'-CCAAT-3' box motif found in the promoters of its target genes to regulate their expression and control cellular identity in particular tissue types. In association with the components in the nfya-1-NF-Y complex, represses the expression of the T-box transcription factor tbx-2 throughout larval development, which most likely restricts its expression to certain tissues. May act to repress txb-2 expression in conjunction with tbx-2 itself, which has an autoregulatory role. With the components in this complex, negatively regulates the expression of the homeobox protein egl-5 to spatially restrict its expression in tissues such as the head. May regulate egl-5 expression in association with the mes-2-mes-3-mes-6 complex. This chain is Nuclear transcription factor Y subunit nfya-1, found in Caenorhabditis elegans.